Reading from the N-terminus, the 234-residue chain is Small ribosomal subunit protein uS3 (234 aa).

The region spanning 39–107 (IRKYVKKELY…EIAVNIKEER (69 aa)) is the KH type-2 domain. Over residues 213 to 222 (PTEKAEETTS) the composition is skewed to basic and acidic residues. Positions 213 to 234 (PTEKAEETTSKPKRRPAKKRGK) are disordered. Over residues 223–234 (KPKRRPAKKRGK) the composition is skewed to basic residues.

Belongs to the universal ribosomal protein uS3 family. Part of the 30S ribosomal subunit. Forms a tight complex with proteins S10 and S14.

Its function is as follows. Binds the lower part of the 30S subunit head. Binds mRNA in the 70S ribosome, positioning it for translation. This Aliarcobacter butzleri (strain RM4018) (Arcobacter butzleri) protein is Small ribosomal subunit protein uS3.